A 326-amino-acid polypeptide reads, in one-letter code: DNA-directed RNA polymerase subunit alpha (326 aa).

Residues 1-232 (MQSATEFLKP…SQLSVFADLE (232 aa)) are alpha N-terminal domain (alpha-NTD). Positions 246-326 (VDPLLLRPVD…NWPPAGLERP (81 aa)) are alpha C-terminal domain (alpha-CTD).

This sequence belongs to the RNA polymerase alpha chain family. Homodimer. The RNAP catalytic core consists of 2 alpha, 1 beta, 1 beta' and 1 omega subunit. When a sigma factor is associated with the core the holoenzyme is formed, which can initiate transcription.

The enzyme catalyses RNA(n) + a ribonucleoside 5'-triphosphate = RNA(n+1) + diphosphate. In terms of biological role, DNA-dependent RNA polymerase catalyzes the transcription of DNA into RNA using the four ribonucleoside triphosphates as substrates. This chain is DNA-directed RNA polymerase subunit alpha, found in Thiobacillus denitrificans (strain ATCC 25259 / T1).